We begin with the raw amino-acid sequence, 30 residues long: Cyclotide cter-F (30 aa).

The cyclopeptide (Gly-Asp) cross-link spans 1-30 (GIPCGESCVFIPCISSVVGCSCKSKVCYLD). Cystine bridges form between Cys4–Cys20, Cys8–Cys22, and Cys13–Cys27.

In terms of processing, contains 3 disulfide bonds. Post-translationally, this is a cyclic peptide.

In terms of biological role, probably participates in a plant defense mechanism. The sequence is that of Cyclotide cter-F from Clitoria ternatea (Butterfly pea).